Consider the following 155-residue polypeptide: DNA-directed RNA polymerase II subunit rpb4 (155 aa).

This sequence belongs to the eukaryotic RPB4 RNA polymerase subunit family. Component of the RNA polymerase II (Pol II) complex consisting of 12 subunits. RPB4 and RPB7 form a subcomplex that protrudes from the 10-subunit Pol II core complex.

The protein resides in the nucleus. In terms of biological role, DNA-dependent RNA polymerase catalyzes the transcription of DNA into RNA using the four ribonucleoside triphosphates as substrates. Component of RNA polymerase II which synthesizes mRNA precursors and many functional non-coding RNAs. Pol II is the central component of the basal RNA polymerase II transcription machinery. It is composed of mobile elements that move relative to each other. RPB4 is part of a subcomplex with RPB7 that binds to a pocket formed by RPB1, RPB2 and RPB6 at the base of the clamp element. The RPB4-RPB7 subcomplex seems to lock the clamp via RPB7 in the closed conformation thus preventing double-stranded DNA to enter the active site cleft. The RPB4-RPB7 subcomplex binds single-stranded DNA and RNA. This chain is DNA-directed RNA polymerase II subunit rpb4 (polr2d), found in Dictyostelium discoideum (Social amoeba).